The chain runs to 148 residues: MGLEKSLLLLPLLVLVLGCVQPSLGKESSAMKFERQHMDSEGTGSSPTYCNQMMKRREMTKGSCKPVNTFVHEPLADVQAVCSQEKVTCKNGKSNCYKSSSALHITDCHLKGNSKYPNCDYKTSNYQKHIIVACEGNPYVPVHFDASV.

Residues 1–25 form the signal peptide; that stretch reads MGLEKSLLLLPLLVLVLGCVQPSLG. Substrate contacts are provided by K32 and R35. Residue H37 is the Proton acceptor of the active site. 4 disulfides stabilise this stretch: C50–C108, C64–C119, C82–C134, and C89–C96. Substrate-binding positions include 65–69 and K90; that span reads KPVNT. Residue H143 is the Proton donor of the active site.

This sequence belongs to the pancreatic ribonuclease family. Monomer. Interacts with and forms tight 1:1 complexes with RNH1. Dimerization of two such complexes may occur. Interaction with RNH1 inhibits this protein. Pancreas.

Its subcellular location is the secreted. It catalyses the reaction an [RNA] containing cytidine + H2O = an [RNA]-3'-cytidine-3'-phosphate + a 5'-hydroxy-ribonucleotide-3'-[RNA].. It carries out the reaction an [RNA] containing uridine + H2O = an [RNA]-3'-uridine-3'-phosphate + a 5'-hydroxy-ribonucleotide-3'-[RNA].. Functionally, endonuclease that catalyzes the cleavage of RNA on the 3' side of pyrimidine nucleotides. Acts on single-stranded and double-stranded RNA. The sequence is that of Ribonuclease pancreatic (RNASE1) from Gerbillus nigeriae (Nigerian gerbil).